The following is a 219-amino-acid chain: Glucagon-2 (219 aa).

The N-terminal stretch at 1–20 (MKSTCYMIGILLLILQNTYQ) is a signal peptide. 5 consecutive propeptides follow at residues 21-50 (SPVP…LKEV), 84-95 (SGGLSRRNADYE), 136-140 (NAEIE), 175-178 (IRYS), and 213-219 (KDLLEEH). The disordered stretch occupies residues 23 to 43 (VPEADGSSRSVKAARNEAVDD).

The protein belongs to the glucagon family.

It is found in the secreted. Functionally, promotes hydrolysis of glycogen and lipids, and raises the blood sugar level. This Xenopus laevis (African clawed frog) protein is Glucagon-2 (gcg2).